Reading from the N-terminus, the 157-residue chain is MRKYLIILVLLLFLSSSFGYYFDYIKVSESNPIKTITFKINKAENYSYKLSFVHYGNINKSMKVNIYLNGNLAYTIDDSNDASPAYKKNASIDITNYLKDGENVLKVEGMNLIGNENYHPYYVLKDIYINEPAKTPIDFKLMIYALLIICFLIYKKC.

The signal sequence occupies residues Met1–Gly19.

This is an uncharacterized protein from Methanocaldococcus jannaschii (strain ATCC 43067 / DSM 2661 / JAL-1 / JCM 10045 / NBRC 100440) (Methanococcus jannaschii).